A 76-amino-acid chain; its full sequence is ATP synthase subunit 9, mitochondrial (76 aa).

At Met-1 the chain carries N-formylmethionine. The next 2 membrane-spanning stretches (helical) occupy residues 14-34 (ISTIGLLGAGIGIAIVFAALI) and 52-72 (ILGFALSEATGLFCLMVSFLL).

The protein belongs to the ATPase C chain family. As to quaternary structure, F-type ATPases have 2 components, CF(1) - the catalytic core - and CF(0) - the membrane proton channel. In yeast, the dimeric form of ATP synthase consists of 18 polypeptides: alpha, beta, gamma, delta, epsilon, 4 (B), 5 (OSCP), 6 (A), 8, 9 (C), d, E (Tim11), f, g, h, i, j and k.

It localises to the mitochondrion membrane. Mitochondrial membrane ATP synthase (F(1)F(0) ATP synthase or Complex V) produces ATP from ADP in the presence of a proton gradient across the membrane which is generated by electron transport complexes of the respiratory chain. F-type ATPases consist of two structural domains, F(1) - containing the extramembraneous catalytic core and F(0) - containing the membrane proton channel, linked together by a central stalk and a peripheral stalk. During catalysis, ATP synthesis in the catalytic domain of F(1) is coupled via a rotary mechanism of the central stalk subunits to proton translocation. Part of the complex F(0) domain. A homomeric c-ring of probably 10 subunits is part of the complex rotary element. This Saccharomyces paradoxus (Yeast) protein is ATP synthase subunit 9, mitochondrial (ATP9).